Here is a 329-residue protein sequence, read N- to C-terminus: Serine dehydratase-like (329 aa).

Methionine 1 is modified (N-acetylmethionine). Residue lysine 48 is modified to N6-(pyridoxal phosphate)lysine.

The protein belongs to the serine/threonine dehydratase family. Monomer. Homodimer. Requires pyridoxal 5'-phosphate as cofactor.

The catalysed reaction is L-serine = pyruvate + NH4(+). The enzyme catalyses L-threonine = 2-oxobutanoate + NH4(+). It catalyses the reaction L-glutamate = D-glutamate. Its activity is regulated as follows. Serine dehydratase activity is inhibited by manganese chloride, ferrous chloride, cobalt chloride, cupric chloride, nickel chloride and zinc chloride. Glutamate racemase activity is inhibited by manganese chloride, ferrous chloride, cupric chloride and zinc chloride. Its function is as follows. Catalyzes the pyridoxal-phosphate-dependent dehydrative deamination of L-threonine and L-serine to ammonia and alpha-ketobutyrate and pyruvate, respectively. Also exhibits racemase activity towards L-glutamate and D-glutamate. This is Serine dehydratase-like (Sdsl) from Rattus norvegicus (Rat).